A 654-amino-acid polypeptide reads, in one-letter code: tRNA 5-methylaminomethyl-2-thiouridine biosynthesis bifunctional protein MnmC (654 aa).

The tRNA (mnm(5)s(2)U34)-methyltransferase stretch occupies residues 1–236; the sequence is MSTLLQHAQI…KWEVMHGVYT (236 aa). Positions 262–654 are FAD-dependent cmnm(5)s(2)U34 oxidoreductase; the sequence is IGAGLAGSAT…FALRRLIRGK (393 aa).

This sequence in the N-terminal section; belongs to the methyltransferase superfamily. tRNA (mnm(5)s(2)U34)-methyltransferase family. The protein in the C-terminal section; belongs to the DAO family. FAD serves as cofactor.

The protein localises to the cytoplasm. It carries out the reaction 5-aminomethyl-2-thiouridine(34) in tRNA + S-adenosyl-L-methionine = 5-methylaminomethyl-2-thiouridine(34) in tRNA + S-adenosyl-L-homocysteine + H(+). Functionally, catalyzes the last two steps in the biosynthesis of 5-methylaminomethyl-2-thiouridine (mnm(5)s(2)U) at the wobble position (U34) in tRNA. Catalyzes the FAD-dependent demodification of cmnm(5)s(2)U34 to nm(5)s(2)U34, followed by the transfer of a methyl group from S-adenosyl-L-methionine to nm(5)s(2)U34, to form mnm(5)s(2)U34. In Pseudomonas entomophila (strain L48), this protein is tRNA 5-methylaminomethyl-2-thiouridine biosynthesis bifunctional protein MnmC.